A 92-amino-acid polypeptide reads, in one-letter code: UPF0213 protein H16_B0156 (92 aa).

Residues 5-80 (SAWYLYLLEC…KRLSSTQKRA (76 aa)) enclose the GIY-YIG domain.

Belongs to the UPF0213 family.

In Cupriavidus necator (strain ATCC 17699 / DSM 428 / KCTC 22496 / NCIMB 10442 / H16 / Stanier 337) (Ralstonia eutropha), this protein is UPF0213 protein H16_B0156.